Consider the following 1006-residue polypeptide: Probable beta-galactosidase A (1006 aa).

Positions 1–18 (MKLLSVCAIALLAAQAAG) are cleaved as a signal peptide. Positions 96, 140, 141, and 142 each coordinate substrate. Asparagine 156 carries N-linked (GlcNAc...) asparagine glycosylation. Asparagine 199 contacts substrate. The Proton donor role is filled by glutamate 200. The cysteines at positions 205 and 206 are disulfide-linked. Residue tyrosine 260 coordinates substrate. A disulfide bridge connects residues cysteine 266 and cysteine 315. Glutamate 298 functions as the Nucleophile in the catalytic mechanism. Tyrosine 364 is a substrate binding site. N-linked (GlcNAc...) asparagine glycosylation is found at asparagine 373, asparagine 402, asparagine 422, asparagine 622, asparagine 760, asparagine 777, and asparagine 914.

It belongs to the glycosyl hydrolase 35 family.

It localises to the secreted. It catalyses the reaction Hydrolysis of terminal non-reducing beta-D-galactose residues in beta-D-galactosides.. In terms of biological role, cleaves beta-linked terminal galactosyl residues from gangliosides, glycoproteins, and glycosaminoglycans. The polypeptide is Probable beta-galactosidase A (lacA) (Aspergillus fumigatus (strain ATCC MYA-4609 / CBS 101355 / FGSC A1100 / Af293) (Neosartorya fumigata)).